A 396-amino-acid polypeptide reads, in one-letter code: Ribosomal RNA large subunit methyltransferase I (396 aa).

In terms of domain architecture, PUA spans 2–81; the sequence is SVRLVLAKGR…ESIDIAFFSR (80 aa).

It belongs to the methyltransferase superfamily. RlmI family.

The protein localises to the cytoplasm. The catalysed reaction is cytidine(1962) in 23S rRNA + S-adenosyl-L-methionine = 5-methylcytidine(1962) in 23S rRNA + S-adenosyl-L-homocysteine + H(+). In terms of biological role, specifically methylates the cytosine at position 1962 (m5C1962) of 23S rRNA. The polypeptide is Ribosomal RNA large subunit methyltransferase I (Shigella boydii serotype 4 (strain Sb227)).